A 275-amino-acid polypeptide reads, in one-letter code: Large ribosomal subunit protein uL2c (275 aa).

The tract at residues 28-53 (TPTKSLTHANHRARGRNHSGSITTRW) is disordered.

Belongs to the universal ribosomal protein uL2 family. In terms of assembly, part of the 50S ribosomal subunit.

The protein resides in the plastid. Its subcellular location is the chloroplast. In Nephroselmis olivacea (Green alga), this protein is Large ribosomal subunit protein uL2c (rpl2).